The sequence spans 74 residues: ATP synthase subunit 9, mitochondrial (74 aa).

The next 2 membrane-spanning stretches (helical) occupy residues 8–28 and 45–72; these read IGAGAATIASAGAAVGIGNVF and LFGYAILGFALTEAIALFALMMAFLILF.

The protein belongs to the ATPase C chain family. As to quaternary structure, F-type ATPases have 2 components, CF(1) - the catalytic core - and CF(0) - the membrane proton channel. CF(1) has five subunits: alpha(3), beta(3), gamma(1), delta(1), epsilon(1). CF(0) has three main subunits: a, b and c.

It is found in the mitochondrion membrane. In terms of biological role, this protein is one of the chains of the nonenzymatic membrane component (F0) of mitochondrial ATPase. The chain is ATP synthase subunit 9, mitochondrial (ATP9) from Pisum sativum (Garden pea).